A 293-amino-acid chain; its full sequence is Probable E3 ubiquitin-protein ligase RNF144A-B (293 aa).

The TRIAD supradomain stretch occupies residues 16 to 237; the sequence is PLLSCKLCLG…YDKGPCRNKL (222 aa). Zn(2+)-binding residues include C20, C23, C43, C46, C111, C116, C135, C138, C143, C146, H151, C156, C186, and C189. The segment at 20–70 adopts an RING-type 1 zinc-finger fold; it reads CKLCLGEFPLEQMTTISQCQCIFCSLCLKQYVELLIKEGLETAISCPDSAC. The IBR-type zinc-finger motif lies at 91 to 156; it reads QHYKRLQFER…RADCHTGQAC (66 aa). Residues 186–215 form an RING-type 2; atypical zinc finger; the sequence is CPKCKVYIERDEGCAQMMCKNCKHAFCWYC. C199 is a catalytic residue. Zn(2+) contacts are provided by C204, C207, C212, C215, H227, and C233. A helical membrane pass occupies residues 251–271; sequence VVGIFAGFGLLLLVASPFLLL.

This sequence belongs to the RBR family. RNF144 subfamily.

The protein resides in the membrane. It carries out the reaction [E2 ubiquitin-conjugating enzyme]-S-ubiquitinyl-L-cysteine + [acceptor protein]-L-lysine = [E2 ubiquitin-conjugating enzyme]-L-cysteine + [acceptor protein]-N(6)-ubiquitinyl-L-lysine.. It functions in the pathway protein modification; protein ubiquitination. E3 ubiquitin-protein ligase which accepts ubiquitin from E2 ubiquitin-conjugating enzymes ube2l3 and ube2l6 in the form of a thioester and then directly transfers the ubiquitin to targeted substrates. The protein is Probable E3 ubiquitin-protein ligase RNF144A-B (rnf144ab) of Danio rerio (Zebrafish).